Consider the following 997-residue polypeptide: NLR family CARD domain-containing protein 4 (997 aa).

The CARD domain maps to 1–88 (MDLIRKNYAE…FFYEDLIGQR (88 aa)). The tract at residues 95–300 (EEDLENLADH…RCGALIAETS (206 aa)) is nucleotide-binding domain (NBD). The NACHT domain maps to 165-478 (SPCVIEGEAG…VTKGEDFLNK (314 aa)). Residue 171 to 178 (GEAGKGKT) participates in ATP binding. The winged-helix domain (WHD) stretch occupies residues 358–465 (MNTQTTLFST…RLSQLLSSED (108 aa)). LRR repeat units follow at residues 550-570 (LFSE…HIEF), 629-652 (NQSI…DIKY), 708-731 (MTEM…LLEG), 735-758 (LVGL…TLAE), 760-785 (ILSL…ESIA), 797-820 (ELKL…LYSL), 821-843 (SHIE…SVEE), 851-875 (LDAI…VLPT), 884-905 (ELAF…SYIN), 908-935 (FENL…ILQY), 937-958 (PNLT…DLVR), and 972-994 (TMEL…AKNM).

It is found in the cytoplasm. It localises to the cytosol. Key component of inflammasomes that indirectly senses specific proteins from pathogenic bacteria and fungi and responds by assembling an inflammasome complex that promotes caspase-1 activation, cytokine production and macrophage pyroptosis. The chain is NLR family CARD domain-containing protein 4 (nlrc4) from Xenopus tropicalis (Western clawed frog).